The chain runs to 515 residues: Membrane-bound transcription factor site-2 protease (515 aa).

At M1–P3 the chain is on the cytoplasmic side. Residues V4–L24 form a helical membrane-spanning segment. Residues K25 to Q74 lie on the Lumenal side of the membrane. Transmembrane regions (helical) follow at residues W75 to G95 and K96 to A107. The Lumenal segment spans residues D108 to Q140. A helical membrane pass occupies residues V141–V165. Residue H167 participates in Zn(2+) binding. The active site involves E168. A run of 3 helical transmembrane segments spans residues G170–F182, N183–L205, and F225–Y247. Residue H171 coordinates Zn(2+). The Lumenal portion of the chain corresponds to T248–K442. Residue N333 is glycosylated (N-linked (GlcNAc...) asparagine). A run of 2 helical transmembrane segments spans residues Y443 to F460 and A461 to L472. Topologically, residues D473–L488 are lumenal. Residues I489–L509 form a helical membrane-spanning segment. The Cytoplasmic portion of the chain corresponds to W510 to R515.

It belongs to the peptidase M50A family. Zn(2+) is required as a cofactor.

Its subcellular location is the membrane. It is found in the cytoplasm. It localises to the golgi apparatus membrane. The enzyme catalyses Cleaves several transcription factors that are type-2 transmembrane proteins within membrane-spanning domains. Known substrates include sterol regulatory element-binding protein (SREBP) -1, SREBP-2 and forms of the transcriptional activator ATF6. SREBP-2 is cleaved at the site 477-DRSRILL-|-CVLTFLCLSFNPLTSLLQWGGA-505. The residues Asn-Pro, 11 residues distal to the site of cleavage in the membrane-spanning domain, are important for cleavage by S2P endopeptidase. Replacement of either of these residues does not prevent cleavage, but there is no cleavage if both of these residues are replaced.. Its function is as follows. Zinc metalloprotease that mediates intramembrane proteolysis of proteins such as ATF6, ATF6B, SREBF1/SREBP1 and SREBF2/SREBP2. Catalyzes the second step in the proteolytic activation of the sterol regulatory element-binding proteins (SREBPs) SREBF1/SREBP1 and SREBF2/SREBP2: cleaves SREBPs within the first transmembrane segment, thereby releasing the N-terminal segment with a portion of the transmembrane segment attached. Mature N-terminal SREBP fragments shuttle to the nucleus and activate gene transcription. Also mediates the second step in the proteolytic activation of the cyclic AMP-dependent transcription factor ATF-6 (ATF6 and ATF6B). Involved in intramembrane proteolysis during bone formation. In astrocytes and osteoblasts, upon DNA damage and ER stress, mediates the second step of the regulated intramembrane proteolytic activation of the transcription factor CREB3L1, leading to the inhibition of cell-cycle progression. The sequence is that of Membrane-bound transcription factor site-2 protease (Mbtps2) from Mus musculus (Mouse).